The sequence spans 29 residues: DFKDWMKTAGEWLKKKGPGILKAAMAAAT.

In terms of tissue distribution, expressed by the venom gland.

The protein localises to the secreted. Has activity against some Gram-positive bacteria and S.cerevisiae. Has a non-hemolytic activity. The polypeptide is M-poneritoxin-Ng3d (Neoponera goeldii (Ponerine ant)).